Reading from the N-terminus, the 312-residue chain is DNA-directed RNA polymerase subunit alpha (312 aa).

The interval 1–229 (MLQYQIDRIE…ELFQPLATVT (229 aa)) is alpha N-terminal domain (alpha-NTD). The alpha C-terminal domain (alpha-CTD) stretch occupies residues 246–312 (IPLEELNLSV…ISIPQSRTSA (67 aa)).

This sequence belongs to the RNA polymerase alpha chain family. As to quaternary structure, in cyanobacteria the RNAP catalytic core is composed of 2 alpha, 1 beta, 1 beta', 1 gamma and 1 omega subunit. When a sigma factor is associated with the core the holoenzyme is formed, which can initiate transcription.

The catalysed reaction is RNA(n) + a ribonucleoside 5'-triphosphate = RNA(n+1) + diphosphate. Functionally, DNA-dependent RNA polymerase catalyzes the transcription of DNA into RNA using the four ribonucleoside triphosphates as substrates. This is DNA-directed RNA polymerase subunit alpha from Parasynechococcus marenigrum (strain WH8102).